A 219-amino-acid polypeptide reads, in one-letter code: Small ribosomal subunit protein uS3 (219 aa).

Residues 38-106 enclose the KH type-2 domain; sequence IREYIENRLK…RVHINIFEVK (69 aa).

This sequence belongs to the universal ribosomal protein uS3 family. As to quaternary structure, part of the 30S ribosomal subunit. Forms a tight complex with proteins S10 and S14.

Binds the lower part of the 30S subunit head. Binds mRNA in the 70S ribosome, positioning it for translation. This is Small ribosomal subunit protein uS3 from Halalkalibacterium halodurans (strain ATCC BAA-125 / DSM 18197 / FERM 7344 / JCM 9153 / C-125) (Bacillus halodurans).